The chain runs to 249 residues: Proteasome subunit alpha (249 aa).

Belongs to the peptidase T1A family. As to quaternary structure, the 20S proteasome core is composed of 14 alpha and 14 beta subunits that assemble into four stacked heptameric rings, resulting in a barrel-shaped structure. The two inner rings, each composed of seven catalytic beta subunits, are sandwiched by two outer rings, each composed of seven alpha subunits. The catalytic chamber with the active sites is on the inside of the barrel. Has a gated structure, the ends of the cylinder being occluded by the N-termini of the alpha-subunits. Is capped at one or both ends by the proteasome regulatory ATPase, PAN.

The protein localises to the cytoplasm. Its activity is regulated as follows. The formation of the proteasomal ATPase PAN-20S proteasome complex, via the docking of the C-termini of PAN into the intersubunit pockets in the alpha-rings, triggers opening of the gate for substrate entry. Interconversion between the open-gate and close-gate conformations leads to a dynamic regulation of the 20S proteasome proteolysis activity. In terms of biological role, component of the proteasome core, a large protease complex with broad specificity involved in protein degradation. The chain is Proteasome subunit alpha from Methanosarcina mazei (strain ATCC BAA-159 / DSM 3647 / Goe1 / Go1 / JCM 11833 / OCM 88) (Methanosarcina frisia).